A 637-amino-acid polypeptide reads, in one-letter code: 3D-(3,5/4)-trihydroxycyclohexane-1,2-dione hydrolase (637 aa).

Residue E66 coordinates thiamine diphosphate. The thiamine pyrophosphate binding stretch occupies residues 442-522 (SLPGDLQRLW…INVLLFDNSG (81 aa)). Residues D493 and N520 each coordinate Mg(2+).

Belongs to the TPP enzyme family. It depends on Mg(2+) as a cofactor. Thiamine diphosphate serves as cofactor.

It catalyses the reaction 3D-3,5/4-trihydroxycyclohexane-1,2-dione + H2O = 5-deoxy-D-glucuronate + H(+). Its pathway is polyol metabolism; myo-inositol degradation into acetyl-CoA; acetyl-CoA from myo-inositol: step 3/7. Its function is as follows. Involved in the cleavage of the C1-C2 bond of 3D-(3,5/4)-trihydroxycyclohexane-1,2-dione (THcHDO) to yield 5-deoxy-glucuronate (5DG). This is 3D-(3,5/4)-trihydroxycyclohexane-1,2-dione hydrolase (iolD) from Bacillus subtilis (strain 168).